The primary structure comprises 296 residues: Glycerol-3-phosphate dehydrogenase [NAD(P)+] (296 aa).

NADPH is bound by residues W12, R31, and K80. The sn-glycerol 3-phosphate site is built by K80, G108, and S110. A112 contributes to the NADPH binding site. Sn-glycerol 3-phosphate contacts are provided by K162, D215, S225, R226, and N227. The active-site Proton acceptor is the K162. An NADPH-binding site is contributed by R226. Residues V250 and E252 each contribute to the NADPH site.

Belongs to the NAD-dependent glycerol-3-phosphate dehydrogenase family.

The protein resides in the cytoplasm. The catalysed reaction is sn-glycerol 3-phosphate + NAD(+) = dihydroxyacetone phosphate + NADH + H(+). The enzyme catalyses sn-glycerol 3-phosphate + NADP(+) = dihydroxyacetone phosphate + NADPH + H(+). Its pathway is membrane lipid metabolism; glycerophospholipid metabolism. Its function is as follows. Catalyzes the reduction of the glycolytic intermediate dihydroxyacetone phosphate (DHAP) to sn-glycerol 3-phosphate (G3P), the key precursor for phospholipid synthesis. In Sulfurimonas denitrificans (strain ATCC 33889 / DSM 1251) (Thiomicrospira denitrificans (strain ATCC 33889 / DSM 1251)), this protein is Glycerol-3-phosphate dehydrogenase [NAD(P)+].